The following is a 273-amino-acid chain: Citrate lyase subunit beta-like protein (273 aa).

Substrate is bound by residues Arg-64 and Glu-112. Mg(2+) contacts are provided by Glu-112 and Asp-138.

The protein belongs to the HpcH/HpaI aldolase family. Citrate lyase beta subunit-like subfamily. Homotrimer. The cofactor is Mg(2+).

May play a role in fatty acid biosynthesis. The chain is Citrate lyase subunit beta-like protein (citE) from Mycobacterium tuberculosis (strain CDC 1551 / Oshkosh).